We begin with the raw amino-acid sequence, 807 residues long: MDNFQYSVQLSDREWAEFSATADECGLLQADLASGDEPLSSDIDQGDSSGSSPPGPPPLFTGQLVSQGRGQQSRELEDVAAQQLVSRSQCEPVLALEASHQVAGTSTQSEAPLFPSLDSVCPGQALSFPGPATCRDKMQRLLQGPAPSSPSKAPHSPESPGHSDNPQSSPDSLEASPRNPGRKKRRAVGAKGTKHSGSLDSAATQMSSPQLTRPKEALMSGTLMAKAQQDKPQPDSTSPEQMAREESGLDLSTPILITEQDQIRKTSRAALHVVSKPVQEVHPDVPMASPNVSTRASKPQPDVALPKPASKPQSDIASSTHPFTPDVSLSTLAFKCQPNTNQSTPASEPDMALSTPASEPDTALSTPASEPDTALSTPASEPDTALSTPASRSQLVKAEFASACTPGLHVDLSAAGSEIKPEVSSSMPAAVDVLRTDLPRSVSKTESKESVSIPVKPSLSPISQAEAAMVDTGVSVPPGGSIEKPAGQFSAGSSGESCLGPVQAPKKKKVRFSMAIPSHEDSGSGEPTGSPFLTPEQPPVPRTAAGSRGGSAAWDAVAVAPRLPQPRILKHLPPPVSSVSAEAESGNCFAVTLPEAYEFFFCDTIEEEDEDVEDEEAASQALDEVQWPDTCEFFFRDSRAQRSRCQRGHSPVSPPRADTVAPVPPEGLVPISIPEVYEHFFTEEGFGHRQPAATPMQTSELSREGGLEASTKPVSPTAEHLSLTVRKAGELRSPLTSFTFSQNDMCLVFVAFATWAVRTSDLQAPDAWKTVLLANIGTISAIRYFRRQVGRGHSGRPRSSSSSNPSC.

Disordered stretches follow at residues 29-80 (QADL…EDVA), 121-391 (CPGQ…TPAS), and 517-548 (PSHE…AGSR). Low complexity-rich tracts occupy residues 40–52 (SSDI…SGSS) and 145–160 (PAPS…PESP). The segment covering 162 to 171 (HSDNPQSSPD) has biased composition (polar residues). Positions 180-194 (PGRKKRRAVGAKGTK) are enriched in basic residues. Polar residues-rich tracts occupy residues 195 to 211 (HSGS…SPQL), 311 to 346 (KPQS…STPA), and 363 to 391 (ALST…TPAS). S198 carries the phosphoserine modification. T534 bears the Phosphothreonine mark. At R548 the chain carries Omega-N-methylarginine.

Highly expressed in skeletal muscles and heart with lower levels in brown adipose tissue (at protein level). Muscle-specific expression is increased by endurance exercise.

It localises to the cytoplasm. The protein localises to the nucleus. Functionally, regulates the expression of selective PPARGC1A/B and ESRRA/B/G target genes with roles in glucose and lipid metabolism, energy transfer, contractile function, muscle mitochondrial biogenesis and oxidative capacity. Required for the efficient induction of MT-CO2, MT-CO3, COX4I1, TFB1M, TFB2M, POLRMT and SIRT3 by PPARGC1A. Positively regulates the PPARGC1A/ESRRG-induced expression of CKMT2, TNNI3 and SLC2A4 and negatively regulates the PPARGC1A/ESRRG-induced expression of PDK4. The sequence is that of PGC-1 and ERR-induced regulator in muscle protein 1 (Perm1) from Mus musculus (Mouse).